The following is a 143-amino-acid chain: Large ribosomal subunit protein uL11 (143 aa).

This sequence belongs to the universal ribosomal protein uL11 family. As to quaternary structure, part of the ribosomal stalk of the 50S ribosomal subunit. Interacts with L10 and the large rRNA to form the base of the stalk. L10 forms an elongated spine to which L12 dimers bind in a sequential fashion forming a multimeric L10(L12)X complex. Post-translationally, one or more lysine residues are methylated.

Forms part of the ribosomal stalk which helps the ribosome interact with GTP-bound translation factors. In Thioalkalivibrio sulfidiphilus (strain HL-EbGR7), this protein is Large ribosomal subunit protein uL11.